The primary structure comprises 507 residues: ATP synthase subunit alpha, mitochondrial (507 aa).

171-178 provides a ligand contact to ATP; the sequence is GDRQTGKT.

This sequence belongs to the ATPase alpha/beta chains family. In terms of assembly, F-type ATPases have 2 components, CF(1) - the catalytic core - and CF(0) - the membrane proton channel. CF(1) has five subunits: alpha(3), beta(3), gamma(1), delta(1), epsilon(1). CF(0) has three main subunits: a, b and c.

It localises to the mitochondrion. Its subcellular location is the mitochondrion inner membrane. Mitochondrial membrane ATP synthase (F(1)F(0) ATP synthase or Complex V) produces ATP from ADP in the presence of a proton gradient across the membrane which is generated by electron transport complexes of the respiratory chain. F-type ATPases consist of two structural domains, F(1) - containing the extramembraneous catalytic core, and F(0) - containing the membrane proton channel, linked together by a central stalk and a peripheral stalk. During catalysis, ATP synthesis in the catalytic domain of F(1) is coupled via a rotary mechanism of the central stalk subunits to proton translocation. Subunits alpha and beta form the catalytic core in F(1). Rotation of the central stalk against the surrounding alpha(3)beta(3) subunits leads to hydrolysis of ATP in three separate catalytic sites on the beta subunits. Subunit alpha does not bear the catalytic high-affinity ATP-binding sites. This is ATP synthase subunit alpha, mitochondrial (ATPA) from Brassica napus (Rape).